The following is a 234-amino-acid chain: Phosphoribosylaminoimidazole-succinocarboxamide synthase (234 aa).

This sequence belongs to the SAICAR synthetase family.

The enzyme catalyses 5-amino-1-(5-phospho-D-ribosyl)imidazole-4-carboxylate + L-aspartate + ATP = (2S)-2-[5-amino-1-(5-phospho-beta-D-ribosyl)imidazole-4-carboxamido]succinate + ADP + phosphate + 2 H(+). It functions in the pathway purine metabolism; IMP biosynthesis via de novo pathway; 5-amino-1-(5-phospho-D-ribosyl)imidazole-4-carboxamide from 5-amino-1-(5-phospho-D-ribosyl)imidazole-4-carboxylate: step 1/2. The chain is Phosphoribosylaminoimidazole-succinocarboxamide synthase from Staphylococcus aureus (strain COL).